The chain runs to 749 residues: Protein SWAP (749 aa).

The interval 8-124 is dry CEEERYL; the sequence is SNVHVQEYKD…RNDQRNAIGF (117 aa). The segment covering 105–118 has biased composition (basic and acidic residues); that stretch reads EQEKEEEEKRRNDQ. Positions 105-149 are disordered; the sequence is EQEKEEEEKRRNDQRNAIGFDYGTGKVKARESDSEDEPFEPPEGI. Residues 166-209 form an SURP motif 1 repeat; sequence IIEKTASFIVANGTQMEIVIKAKQRNNAEQFGFLEFDHRLNPFY. The segment at 256-310 is disordered; sequence HGSDSEDSDSDYELHPSLLSGGAKRPVTPEKPGAIGPRKKPVEPEKPPDFTLKPV. One copy of the SURP motif 2 repeat lies at 391 to 431; it reads ILNSYAEHVAQRGLEAEASLAAREDLQLHFMEPKSPYYSYY. The span at 458-478 shows a compositional bias: low complexity; sequence PAPPSAVSSPGPSSLMSLNLS. Disordered stretches follow at residues 458–498, 537–592, and 608–749; these read PAPP…SSRL, LRND…QVDR, and KAKK…DRRR. Positions 538–552 are enriched in basic and acidic residues; it reads RNDEPRDESSFRFDP. Positions 560–569 are enriched in polar residues; the sequence is PSDTTANFSD. The span at 574–583 shows a compositional bias: pro residues; that stretch reads FPPPTPPVIP. Basic and acidic residues-rich tracts occupy residues 608-659 and 679-689; these read KAKK…RSLD and EEMKRTDEDRE. 2 stretches are compositionally biased toward basic residues: residues 690–704 and 714–749; these read RKRH…RRSR and EHKK…DRRR.

It is a regulator of pre-mRNA splicing (and, possibly, of other RNA processing events). It may regulate its own expression at the level of RNA processing. This Caenorhabditis elegans protein is Protein SWAP (swp-1).